Reading from the N-terminus, the 243-residue chain is Uridylate kinase (243 aa).

Residue 12-15 (KLSG) participates in ATP binding. The segment at 20–25 (GPGGSG) is involved in allosteric activation by GTP. Residue Gly-56 coordinates UMP. Positions 57 and 61 each coordinate ATP. UMP is bound by residues Asp-76 and 137-144 (TGSPYFST). Positions 165, 171, and 174 each coordinate ATP.

The protein belongs to the UMP kinase family. As to quaternary structure, homohexamer.

It is found in the cytoplasm. It catalyses the reaction UMP + ATP = UDP + ADP. The protein operates within pyrimidine metabolism; CTP biosynthesis via de novo pathway; UDP from UMP (UMPK route): step 1/1. With respect to regulation, allosterically activated by GTP. Inhibited by UTP. In terms of biological role, catalyzes the reversible phosphorylation of UMP to UDP. This chain is Uridylate kinase, found in Oenococcus oeni (strain ATCC BAA-331 / PSU-1).